A 266-amino-acid chain; its full sequence is NAD kinase 2 (266 aa).

The active-site Proton acceptor is the Asp51. NAD(+) is bound by residues 51 to 52 (DG), 123 to 124 (NE), Arg150, Asp152, 163 to 168 (TGYSKS), and Ala187.

It belongs to the NAD kinase family. Requires a divalent metal cation as cofactor.

It localises to the cytoplasm. It carries out the reaction NAD(+) + ATP = ADP + NADP(+) + H(+). In terms of biological role, involved in the regulation of the intracellular balance of NAD and NADP, and is a key enzyme in the biosynthesis of NADP. Catalyzes specifically the phosphorylation on 2'-hydroxyl of the adenosine moiety of NAD to yield NADP. In Oceanobacillus iheyensis (strain DSM 14371 / CIP 107618 / JCM 11309 / KCTC 3954 / HTE831), this protein is NAD kinase 2.